The chain runs to 150 residues: Ribonuclease K6 (150 aa).

An N-terminal signal peptide occupies residues 1–23; sequence MVLCFPLLLLLLVLWGPVCPLHA. Residue His-38 is the Proton acceptor of the active site. 4 cysteine pairs are disulfide-bonded: Cys-46–Cys-104, Cys-60–Cys-114, Cys-78–Cys-129, and Cys-85–Cys-92. The N-linked (GlcNAc...) asparagine glycan is linked to Asn-55. Substrate is bound by residues 61–65 and Lys-86; that span reads KHQNT. An N-linked (GlcNAc...) asparagine glycan is attached at Asn-100. Arg-105 contacts substrate. Catalysis depends on His-145, which acts as the Proton donor.

Belongs to the pancreatic ribonuclease family. In terms of assembly, interacts (via N-terminus) with bacterial lipopolysaccharide (LPS).

The protein resides in the secreted. It localises to the lysosome. It is found in the cytoplasmic granule. Ribonuclease which shows a preference for the pyrimidines uridine and cytosine. Has potent antibacterial activity against a range of Gram-positive and Gram-negative bacteria, including P.aeruginosa, A.baumanii, M.luteus, S.aureus, E.faecalis, E.faecium, S.saprophyticus and E.coli. Causes loss of bacterial membrane integrity, and also promotes agglutination of Gram-negative bacteria. Probably contributes to urinary tract sterility. Bactericidal activity is independent of RNase activity. The sequence is that of Ribonuclease K6 (RNASE6) from Gorilla gorilla gorilla (Western lowland gorilla).